The sequence spans 570 residues: MKLADFVTYVFGSLLAGLVTLKVLSSFIPSLLVTLPAKVRLRVNNSLLKCSNNLNRIPVLDFGWKNSSVRRAFILASERPSDYTNKIYGDRVHIAYNDRIKRESFVNKLGFDSKRKLLGFFHPYCNAGGGGEKVLWKAVETSLNQDKNNICVIYTGDTDVNGSDILNSVRRRFEYDLDSDRIVFIFLQKRRLVESKSWPKFTLLGQAYGSIILSIEALTTLAPDYWIDTMGYPFAYPFVSLFARIPIVTYTHYPVISTDMLQKLKTMPGFHTNFKLIGKYVYWKIFMLAYKFSGLFVEIASTNSTWTYNHIKSIWSSTKNIHIIYPPCSTESLIEGCDKSDPVKRLNQAVVIAQFRPEKRHELILSSFSSFIDATTKKDLIPKIIFIGSTRNVEDREYVETLKKYAFEALKIPTHLVDFKTDCKYDDMKSILYSSWFGINAMWNEHFGIAVVEYMASGLIPLCHASAGPLYDIVVPWDSKKNEQSTDKANETGFFFIDETDPDFLAKDSSKYSSLRTLFAQVSKLNTVQRIDISNRAKMCSLSKFSDSEFERSWNEVLEELNLTHNRMFS.

At Met-1–Val-7 the chain is on the lumenal side. The helical transmembrane segment at Thr-8–Arg-70 threads the bilayer. The Cytoplasmic segment spans residues Arg-71–Lys-200. The helical intramembrane region spans Phe-201–Leu-221. Residues Ala-222–His-446 lie on the Cytoplasmic side of the membrane. Positions Phe-447 to Ala-467 form an intramembrane region, helical. Residues Gly-468 to Ser-570 are Cytoplasmic-facing.

The protein belongs to the glycosyltransferase group 1 family.

It localises to the endoplasmic reticulum membrane. The enzyme catalyses an alpha-D-Man-(1-&gt;3)-[alpha-D-Man-(1-&gt;6)]-beta-D-Man-(1-&gt;4)-beta-D-GlcNAc-(1-&gt;4)-alpha-D-GlcNAc-diphospho-di-trans,poly-cis-dolichol + 2 GDP-alpha-D-mannose = an alpha-D-Man-(1-&gt;2)-alpha-D-Man-(1-&gt;2)-alpha-D-Man-(1-&gt;3)-[alpha-D-Man-(1-&gt;6)]-beta-D-Man-(1-&gt;4)-beta-D-GlcNAc-(1-&gt;4)-alpha-D-GlcNAc-diphospho-di-trans,poly-cis-dolichol + 2 GDP + 2 H(+). Its pathway is protein modification; protein glycosylation. Functionally, GDP-Man:Man(3)GlcNAc(2)-PP-Dol alpha-1,2-mannosyltransferase that operates in the biosynthetic pathway of dolichol-linked oligosaccharides, the glycan precursors employed in protein asparagine (N)-glycosylation. The assembly of dolichol-linked oligosaccharides begins on the cytosolic side of the endoplasmic reticulum membrane and finishes in its lumen. The sequential addition of sugars to dolichol pyrophosphate produces dolichol-linked oligosaccharides containing fourteen sugars, including two GlcNAcs, nine mannoses and three glucoses. Once assembled, the oligosaccharide is transferred from the lipid to nascent proteins by oligosaccharyltransferases. Catalyzes, on the cytoplasmic face of the endoplasmic reticulum, the addition of the fourth and fifth mannose residues to the dolichol-linked oligosaccharide chain, to produce Man(5)GlcNAc(2)-PP-dolichol core oligosaccharide. The sequence is that of GDP-Man:Man(3)GlcNAc(2)-PP-Dol alpha-1,2-mannosyltransferase (ALG11) from Kluyveromyces lactis (strain ATCC 8585 / CBS 2359 / DSM 70799 / NBRC 1267 / NRRL Y-1140 / WM37) (Yeast).